Consider the following 312-residue polypeptide: Olfactory receptor 2L3 (312 aa).

Topologically, residues 1-24 are extracellular; sequence MENYNQTSTDFILLGFFPPSRIGL. N5 carries N-linked (GlcNAc...) asparagine glycosylation. A helical transmembrane segment spans residues 25 to 48; sequence FLFILIVFIFLMALIGNLSMILLI. Topologically, residues 49 to 56 are cytoplasmic; that stretch reads FLDTHLHT. A helical transmembrane segment spans residues 57–78; the sequence is PMYFLLSQLSLIDLNYISTIVP. At 79-99 the chain is on the extracellular side; that stretch reads KMASDFLSGNKSISFTGCGIQ. The N-linked (GlcNAc...) asparagine glycan is linked to N88. A disulfide bond links C96 and C188. The helical transmembrane segment at 100–119 threads the bilayer; sequence SFFFSALGGAEALLLASMAY. Topologically, residues 120–138 are cytoplasmic; the sequence is DRYIAICFPLHYPIRMSKR. The chain crosses the membrane as a helical span at residues 139–157; it reads MCVLMITGSWIIGSINACA. Topologically, residues 158–194 are extracellular; it reads HTVYVLHIPYCQSRAINHFFCDVPAMVTLACMDTWVY. Residues 195–218 traverse the membrane as a helical segment; it reads EGTVFLSTTIFLVFPFIAISCSYG. The Cytoplasmic portion of the chain corresponds to 219 to 235; it reads RVLLAVYHMKSAEGRKK. Residues 236–258 traverse the membrane as a helical segment; the sequence is AYLTCSTHLTVVTFYYAPFVYTY. Topologically, residues 259 to 271 are extracellular; sequence LRPRSLRSPTEDK. The helical transmembrane segment at 272–291 threads the bilayer; it reads VLAVFYTTLTPMLNPIIYSL. Residues 292 to 312 are Cytoplasmic-facing; that stretch reads RNKEVMGALTRVSQRICSGKM.

It belongs to the G-protein coupled receptor 1 family.

It is found in the cell membrane. Odorant receptor. The chain is Olfactory receptor 2L3 (OR2L3) from Homo sapiens (Human).